Reading from the N-terminus, the 463-residue chain is Argininosuccinate lyase (463 aa).

It belongs to the lyase 1 family. Argininosuccinate lyase subfamily.

The protein localises to the cytoplasm. It carries out the reaction 2-(N(omega)-L-arginino)succinate = fumarate + L-arginine. The protein operates within amino-acid biosynthesis; L-arginine biosynthesis; L-arginine from L-ornithine and carbamoyl phosphate: step 3/3. This chain is Argininosuccinate lyase, found in Bacillus cereus (strain AH187).